We begin with the raw amino-acid sequence, 496 residues long: Transactivator/viroplasmin protein (496 aa).

The interval 102-128 is disordered; it reads RPNQGIQIPKKNEDHSSSSSKEEKGIQ. The segment covering 111–128 has biased composition (basic and acidic residues); it reads KKNEDHSSSSSKEEKGIQ.

The protein belongs to the caulimoviridae viroplasmin family.

The protein localises to the host cytoplasm. Its function is as follows. Enhances the translation of downstream ORFs on polycistronic mRNAs derived from carnation etched ring virus. The protein is Transactivator/viroplasmin protein of Dianthus caryophyllus (Carnation).